The following is a 364-amino-acid chain: Fructose-bisphosphate aldolase C (364 aa).

The residue at position 5 (Tyr5) is a Phosphotyrosine. Phosphoserine is present on residues Ser36, Ser39, and Ser45. Arg56 provides a ligand contact to substrate. Lys111 carries the N6-acetyllysine modification. The residue at position 132 (Ser132) is a Phosphoserine. A substrate-binding site is contributed by Lys147. Residue Glu188 is the Proton acceptor of the active site. Lys230 functions as the Schiff-base intermediate with dihydroxyacetone-P in the catalytic mechanism.

This sequence belongs to the class I fructose-bisphosphate aldolase family. As to quaternary structure, homotetramer. Interacts with ATP6V1E1. May interact with PLD2.

The enzyme catalyses beta-D-fructose 1,6-bisphosphate = D-glyceraldehyde 3-phosphate + dihydroxyacetone phosphate. The protein operates within carbohydrate degradation; glycolysis; D-glyceraldehyde 3-phosphate and glycerone phosphate from D-glucose: step 4/4. This is Fructose-bisphosphate aldolase C (ALDOC) from Homo sapiens (Human).